We begin with the raw amino-acid sequence, 452 residues long: Maltoporin (452 aa).

Positions 1 to 25 (MMITLRKLPLAVAVAAGVMSAQAMA) are cleaved as a signal peptide.

The protein belongs to the porin LamB (TC 1.B.3) family. As to quaternary structure, homotrimer formed of three 18-stranded antiparallel beta-barrels, containing three independent channels.

It localises to the cell outer membrane. The catalysed reaction is beta-maltose(in) = beta-maltose(out). Involved in the transport of maltose and maltodextrins. The sequence is that of Maltoporin from Salmonella newport (strain SL254).